The following is a 61-amino-acid chain: Potassium channel toxin alpha-KTx 5.3 (61 aa).

An N-terminal signal peptide occupies residues 1 to 28 (MHNYYKIVLIMVAFFAVIITFSNIQVEG). Disulfide bonds link Cys-31/Cys-49, Cys-36/Cys-54, and Cys-40/Cys-56. The interval 34 to 37 (KRCQ) is [R/K]XCQ motif. Histidine amide is present on His-59.

The protein belongs to the short scorpion toxin superfamily. Potassium channel inhibitor family. Alpha-KTx 05 subfamily. Expressed by the venom gland.

The protein resides in the secreted. Blocks small conductance calcium-activated potassium channels (KCNN, SK). Has also been shown to weakly inhibit Kv11.1/KCNH2/ERG1, Kv1.2/KCNA2, Kv1.3/KCNA3 and Kv2.1/KCNB1 voltage-gated potassium channels. The chain is Potassium channel toxin alpha-KTx 5.3 from Olivierus martensii (Manchurian scorpion).